A 182-amino-acid chain; its full sequence is Large ribosomal subunit protein uL15 (182 aa).

A disordered region spans residues 1-52 (MDLSSLRPAKGAVKNKKRIGRGPGSGNGTTAGKGNKGQQSRSGYTRPVSEGG). Residues 21 to 35 (RGPGSGNGTTAGKGN) are compositionally biased toward gly residues.

The protein belongs to the universal ribosomal protein uL15 family. As to quaternary structure, part of the 50S ribosomal subunit.

Functionally, binds to the 23S rRNA. This Chlorobium phaeobacteroides (strain BS1) protein is Large ribosomal subunit protein uL15.